Here is a 138-residue protein sequence, read N- to C-terminus: Superoxide dismutase [Mn] (138 aa).

The Mn(2+) site is built by histidine 2, histidine 49, aspartate 133, and histidine 137.

This sequence belongs to the iron/manganese superoxide dismutase family. Mn(2+) serves as cofactor.

The enzyme catalyses 2 superoxide + 2 H(+) = H2O2 + O2. Destroys superoxide anion radicals which are normally produced within the cells and which are toxic to biological systems. The protein is Superoxide dismutase [Mn] (sodA) of Mycobacterium szulgai.